Consider the following 844-residue polypeptide: DNA mismatch repair protein MutS (844 aa).

610-617 (GPNMGGKS) is an ATP binding site.

Belongs to the DNA mismatch repair MutS family.

Functionally, this protein is involved in the repair of mismatches in DNA. It is possible that it carries out the mismatch recognition step. This protein has a weak ATPase activity. In Francisella tularensis subsp. mediasiatica (strain FSC147), this protein is DNA mismatch repair protein MutS.